Consider the following 558-residue polypeptide: MADLSLPPDSLFLGFDSSTQSMKATVLDSNLNIIKTELVHFDSDLPQYKTKDGVYRDTTVNGRIVSPTLMWVEAFDLILQKLSNANFDFAKVIAVSGSGQQHGSVYWSKGSSEVLRSLDSKRSLKEQLENAFSVKESPIWMDSSTTLQCKEIENAVGGAMELSKITGSRAYERFTGPQIRKLFMTQGEVYKSTERISLVSSFMASLLVGDYACIDETDAAGMNLMDIEKRCWSKAALEATATGLEEKLGKLAPAYATAGSISQYFVQRFGFEKNCVVVQWSGDNPNSLAGLTLSTPGDLAISLGTSDTVFGITKELQPSLEGHVLPNPVDPESYMVMLVYKNASLTREEIRDRCAEGSWDVFNKYLQQTQPLNNGKLGFYYTENEILPPLPVGSHRYILENFSGESLEGVKEQEVGEFDPPSEVRALIEGQFLSKRAHTERFGMPSPPLRIIATGGASANENILSLISAIFGCDVYTVQRPDSASLGAALRAAHGWLCNKKGSFVPISNLYEGKLETTSLNCKLKVKAGDANIASTYGLLMKKRMEIENKLVEKLGHF.

Residues aspartate 16, 20 to 23, serine 111, and aspartate 283 each bind substrate; that span reads QSMK. Residues threonine 305 and 456–460 contribute to the ATP site; that span reads GASAN.

Belongs to the FGGY kinase family. The cofactor is a divalent metal cation.

It is found in the cytoplasm. The enzyme catalyses D-xylulose + ATP = D-xylulose 5-phosphate + ADP + H(+). It participates in isoprenoid biosynthesis; carotenoid biosynthesis. Repressed by oxo-clomazone (keto-clomazone), a bleaching herbicide. In terms of biological role, mediates 1-deoxy-D-xylulose (DX) phosphorylation in the cytoplasm prior to the translocation of 1-deoxy-D-xylulose 5-phosphate into plastids. Can also phosphorylate D-xylulose (Xyl). Uses preferentially ATP as cosubstrate. The polypeptide is Xylulose kinase 2 (Arabidopsis thaliana (Mouse-ear cress)).